We begin with the raw amino-acid sequence, 44 residues long: Small ribosomal subunit protein eS7 (44 aa).

Residues 18 to 34 are compositionally biased toward basic residues; sequence KPTRKSRIKNKQKRPRS. The disordered stretch occupies residues 18-44; that stretch reads KPTRKSRIKNKQKRPRSRTLTAVHDAI.

This sequence belongs to the eukaryotic ribosomal protein eS7 family. Component of the small ribosomal subunit.

It localises to the cytoplasm. Its subcellular location is the cytoskeleton. The protein resides in the microtubule organizing center. The protein localises to the centrosome. It is found in the nucleus. Functionally, component of the small ribosomal subunit. The ribosome is a large ribonucleoprotein complex responsible for the synthesis of proteins in the cell. Required for rRNA maturation. This Salmo salar (Atlantic salmon) protein is Small ribosomal subunit protein eS7 (rps7).